We begin with the raw amino-acid sequence, 382 residues long: MRVLAVATPALGHLFPAVPLLWALRARGDEVLVVTGGDALRVAEAGLPVVDALPGETLTTLFGAYQETDPAFFVALRRSPMTTLRDLAPVLAYLAGRLLEPARRAAERWRPDAILATHGQAAGAVVAAEHGIPLVEHGFGFVRSDGAQEAVRQLLAERLGPAGSEPPPERYFLDIAVPSMTSAIEGMSLRAVPYNGGAVLPLSGASVGGRPPRPRVLVTAGTQLLHTHGAGALAWLPEVAAGHEAEFLLAAGGADLRDLGRLPPHVRVLDWTPLATVLPTCSAVVHHGGSGTTLAALAAGVPQLVSPALADNHINARAVADRGAGLETAVPDATTLTALLREPAFAKAAREVADELRSLPAPADVAARLHTAFGLPTTQGDA.

The protein belongs to the glycosyltransferase 28 family.

The catalysed reaction is 8-demethyltetracenomycin C + dTDP-beta-L-rhamnose = 8-demethyl-8-alpha-L-rhamnosyl-tetracenomycin C + dTDP + H(+). It functions in the pathway antibiotic biosynthesis. Its function is as follows. Glycosyltransferase that transfers an L-rhamnose moiety from dTDP-L-rhamnose to the elloramycin aglycone 8-demethyl-tetracenomycin C (8DMTC) in elloramycin biosynthesis, an antitumor polyketide. Possesses donor substrate flexibility: able to transfer at least 11 different sugars to 8DMTC, such as NDP-D-glucose, as well as NDP-L-digitoxose, including both L- and D-isomeric forms of some sugars. This is Elloramycin glycosyltransferase ElmGT from Streptomyces olivaceus.